The sequence spans 623 residues: DNA mismatch repair protein MutL (623 aa).

Over residues 353–368 the composition is skewed to polar residues; sequence AQQSAPRPANSYSPAS. Residues 353 to 389 form a disordered region; the sequence is AQQSAPRPANSYSPASWRTAPPAPRSEWSPQTAQTAH.

Belongs to the DNA mismatch repair MutL/HexB family.

This protein is involved in the repair of mismatches in DNA. It is required for dam-dependent methyl-directed DNA mismatch repair. May act as a 'molecular matchmaker', a protein that promotes the formation of a stable complex between two or more DNA-binding proteins in an ATP-dependent manner without itself being part of a final effector complex. The protein is DNA mismatch repair protein MutL of Brucella melitensis biotype 2 (strain ATCC 23457).